Reading from the N-terminus, the 513-residue chain is MGSSEEQSVPGDDFYEESGDLNTGLSLVLRPAKSNEGESSLSSPKGSKLTLVSQLEASENPSVVLWAGEYCPDSLVPEEERVGSPMDEKVVGLDFLSQPSVETTATGQQVTNLETKGAREHPSPESVCAETEAGSIRRAPQASEEAKFAASAGTFFPKGLEQSRSWVTPRKSTTSRMVIGENVHHPTSEPEPLDELNEVQMMRVTICLKDGNHGNQAKNSGPAETGDLARHSNVQTRDSFMRMPSSLLVSTTRGLTSGVERQASKEPEPFSSKKKQGTLWGKGGSKSSYPEAAAGIGALPKASPRKKMAQKKKPLWDASAVTLGRAFHQWGQRLKSAPAEPATFPPISGVGLPGRSNKCSLLPLRPKQCKNLYTGKRSGAKKTKELQLVAKEDTDSTRDPSSQVQFPTHRAEPPCQSVHQEFNSGDINARSLQDAGNSQSSALNQRGIMSKKSVLSGDQEEPVGLPAPDSEILQLPGTQGCPRCPELQKEIEDLRKQLSALQAVSEKFQTHLS.

Residues 1 to 48 (MGSSEEQSVPGDDFYEESGDLNTGLSLVLRPAKSNEGESSLSSPKGSK) form a disordered region. Over residues 37-48 (GESSLSSPKGSK) the composition is skewed to polar residues. Residues serine 43, serine 84, and serine 123 each carry the phosphoserine modification. Disordered stretches follow at residues 210 to 229 (DGNHGNQAKNSGPAETGDLA), 236 to 287 (TRDS…GSKS), 390 to 414 (AKEDTDSTRDPSSQVQFPTHRAEPP), and 453 to 481 (SVLSGDQEEPVGLPAPDSEILQLPGTQGC).

This is an uncharacterized protein from Mus musculus (Mouse).